The sequence spans 773 residues: 4'-phosphopantetheine phosphatase (773 aa).

Alanine 2 carries the post-translational modification N-acetylalanine. The tract at residues 2–402 (AECGASGSGS…SPELGPAQRA (401 aa)) is pantothenate kinase. Positions 196 and 199 each coordinate acetyl-CoA. A 3'-nitrotyrosine modification is found at tyrosine 320. A phosphoserine mark is found at serine 393 and serine 404. Residues 403-773 (RSGTFDLLEM…VIFKYEVPAE (371 aa)) are 4'-phosphopantetheine phosphatase. Threonine 406 is subject to Phosphothreonine. Aspartate 623, asparagine 624, and aspartate 659 together coordinate Mn(2+). The Subfamily II EGMGR motif motif lies at 724–728 (EGMGR).

In the N-terminal section; belongs to the type II pantothenate kinase family. It in the C-terminal section; belongs to the damage-control phosphatase family. Phosphopantetheine phosphatase II subfamily. As to quaternary structure, homodimer. Interacts with PKM. Mn(2+) serves as cofactor. Ni(2+) is required as a cofactor. Widely expressed with high expression in the muscle. Expressed in the retina and lens epithelium, mainly in ganglion cell layer, outer plexiform layer and retinal pigment layer (at protein level).

Its subcellular location is the cytoplasm. It catalyses the reaction (R)-4'-phosphopantetheine + H2O = (R)-pantetheine + phosphate. The enzyme catalyses (R)-4'-phosphopantetheine sulfonate + H2O = (R)-pantetheine sulfonate + phosphate. The catalysed reaction is (R)-4'-phospho-S-sulfopantetheine + H2O = (R)-S-sulfopantetheine + phosphate. Its activity is regulated as follows. Activity is strongly promoted by Co(2+), Ni(2+), Mg(2+) and Mn(2+). Activity is inhibited by EDTA. In terms of biological role, phosphatase which shows a preference for 4'-phosphopantetheine and its oxidatively damaged forms (sulfonate or S-sulfonate), providing strong indirect evidence that the phosphatase activity pre-empts damage in the coenzyme A (CoA) pathway. Hydrolyzing excess 4'-phosphopantetheine could constitute a directed overflow mechanism to prevent its oxidation to the S-sulfonate, sulfonate, or other forms. Hydrolyzing 4'-phosphopantetheine sulfonate or S-sulfonate would forestall their conversion to inactive forms of CoA and acyl carrier protein. May play a role in the physiological regulation of CoA intracellular levels. The protein is 4'-phosphopantetheine phosphatase of Homo sapiens (Human).